A 546-amino-acid chain; its full sequence is Chaperonin GroEL (546 aa).

ATP contacts are provided by residues 29–32, lysine 50, 86–90, glycine 414, and aspartate 492; these read TMGP and DGTTT.

The protein belongs to the chaperonin (HSP60) family. Forms a cylinder of 14 subunits composed of two heptameric rings stacked back-to-back. Interacts with the co-chaperonin GroES.

Its subcellular location is the cytoplasm. It catalyses the reaction ATP + H2O + a folded polypeptide = ADP + phosphate + an unfolded polypeptide.. Together with its co-chaperonin GroES, plays an essential role in assisting protein folding. The GroEL-GroES system forms a nano-cage that allows encapsulation of the non-native substrate proteins and provides a physical environment optimized to promote and accelerate protein folding. The protein is Chaperonin GroEL of Helicobacter acinonychis (strain Sheeba).